Reading from the N-terminus, the 417-residue chain is Ankyrin repeat and SAM domain-containing protein 4B (417 aa).

Positions 1 to 252 are mediates localization to microvilli; sequence MSTRYHQAAS…SGDFKEKLQL (252 aa). 3 ANK repeats span residues 31 to 60, 64 to 93, and 97 to 126; these read DGMTPTLLAAYHGNLEALEIICSRGGDPDR, WGNTPLHFAASNGHAHCVSFLVNFGANIFA, and DLQTPLDAAASREQNECVALLDKAATAQNI. Residues 130-164 are a coiled coil; it reads KKVTRLKEQAQKNARRQIKECERLQEKHQNKMAHT. The interval 151–195 is disordered; sequence ERLQEKHQNKMAHTYSKEESGTLSSSKGTFSRSSPSNASAPGTFG. Over residues 171 to 190 the composition is skewed to polar residues; it reads GTLSSSKGTFSRSSPSNASA. The mediates interaction with MYO7B stretch occupies residues 253–346; the sequence is SAEEDGSVHH…EWEEDVVDAT (94 aa). Phosphoserine is present on S283. Positions 305–330 are disordered; it reads RQGASEADEGAADEEGEENGLKDDLP. Over residues 310–322 the composition is skewed to acidic residues; that stretch reads EADEGAADEEGEE. Residues 351–403 form the SAM domain; that stretch reads FLLSQHLEEFLPIFKREQIDLEALLLCSDEDLQSIQMQLGPRKKVLNAINRRK. Residues 415–417 carry the PDZ-binding; mediates interaction with USH1C motif; sequence TSL.

Part of the IMAC/intermicrovillar adhesion complex/intermicrovillar tip-link complex composed of ANKS4B, MYO7B, USH1C, CDHR2 and CDHR5. Interacts with USH1C; the interaction is direct and is required for ANKS4B localization to the tip of microvilli. Interacts with MYO7B; the interaction is direct. May interact with HSPA5. Expressed in kidney and small intestine.

It is found in the cell projection. The protein resides in the microvillus. In terms of biological role, as part of the intermicrovillar adhesion complex/IMAC plays a role in epithelial brush border differentiation, controlling microvilli organization and length. Plays a role in assembly of the complex. May play a role in cellular response to endoplasmic reticulum stress. The chain is Ankyrin repeat and SAM domain-containing protein 4B from Homo sapiens (Human).